The sequence spans 72 residues: Dermaseptin-A4 (72 aa).

The signal sequence occupies residues 1–22 (MAFLKKSLFLVLFLGMVSLSIC). A propeptide spanning residues 23-41 (EEEKREEENEQEDDEQSEE) is cleaved from the precursor. Residues 24–43 (EEKREEENEQEDDEQSEEKR) form a disordered region. Residues 30–39 (ENEQEDDEQS) show a composition bias toward acidic residues. Alanine amide is present on A69. Positions 71–72 (EQ) are excised as a propeptide.

Belongs to the frog skin active peptide (FSAP) family. Dermaseptin subfamily. In terms of tissue distribution, expressed by the skin glands.

The protein localises to the secreted. In terms of biological role, possesses a potent antimicrobial activity against Gram-positive and Gram-negative bacteria. Probably acts by disturbing membrane functions with its amphipathic structure. This is Dermaseptin-A4 from Agalychnis annae (Blue-sided leaf frog).